A 666-amino-acid polypeptide reads, in one-letter code: Calpain-10 (666 aa).

In terms of domain architecture, Calpain catalytic spans 13–321 (LFRDAAFPAS…FDEVTIGYPV (309 aa)). Catalysis depends on residues Cys-73, His-238, and Asn-263. Domain III regions lie at residues 322–488 (TEAG…ISLS) and 507–648 (EWET…IHSQ).

Belongs to the peptidase C2 family.

In terms of biological role, calcium-regulated non-lysosomal thiol-protease which catalyzes limited proteolysis of substrates involved in cytoskeletal remodeling and signal transduction. May play a role in insulin-stimulated glucose uptake. The polypeptide is Calpain-10 (Capn10) (Mus musculus (Mouse)).